The following is a 95-amino-acid chain: Probable FAD-linked sulfhydryl oxidase OPG072 (95 aa).

The Intravirion segment spans residues 1-8 (MNPKHWGR). The ERV/ALR sulfhydryl oxidase domain maps to 1 to 95 (MNPKHWGRAV…AIDVSKVKPL (95 aa)). The helical transmembrane segment at 9–25 (AVWTIIFIVLSQAGLDG) threads the bilayer. Residues 26–95 (NIEACKRKLY…AIDVSKVKPL (70 aa)) lie on the Virion surface side of the membrane. Cys43 and Cys46 are oxidised to a cystine.

This sequence belongs to the orthopoxvirus OPG072 family. In terms of assembly, interacts with OPG128; this interaction involves formation of a transient disulfide-bonded intermediate, allowing disulfide bond transfer. Requires FAD as cofactor.

Its subcellular location is the virion membrane. The protein localises to the host cytoplasm. The enzyme catalyses 2 R'C(R)SH + O2 = R'C(R)S-S(R)CR' + H2O2. In terms of biological role, FAD-dependent sulfhydryl oxidase that catalyzes disulfide bond formation. The complete pathway for formation of disulfide bonds in intracellular virion membrane proteins sequentially involves thiol-disulfide transfer between OPG072, OPG128 and OPG088. The sequence is that of Probable FAD-linked sulfhydryl oxidase OPG072 (OPG072) from Monkeypox virus.